The following is a 101-amino-acid chain: Small ribosomal subunit protein uS14A (101 aa).

Residues 31–67 are disordered; sequence LRRPSSTEAERLAAQRELRRQPRDASPTRVRNRDQID. The span at 38–53 shows a compositional bias: basic and acidic residues; it reads EAERLAAQRELRRQPR.

The protein belongs to the universal ribosomal protein uS14 family. Part of the 30S ribosomal subunit. Contacts proteins S3 and S10.

In terms of biological role, binds 16S rRNA, required for the assembly of 30S particles and may also be responsible for determining the conformation of the 16S rRNA at the A site. This Streptomyces coelicolor (strain ATCC BAA-471 / A3(2) / M145) protein is Small ribosomal subunit protein uS14A.